An 87-amino-acid polypeptide reads, in one-letter code: MNSLLMITACLFLIGTVWAKEGYLVNKSTGCKYGCLKLGENEGCDKECKAKNQGGSYGYCYAFACWCEGLPESTPTYPLPNKSCGKK.

An N-terminal signal peptide occupies residues 1-19; that stretch reads MNSLLMITACLFLIGTVWA. In terms of domain architecture, LCN-type CS-alpha/beta spans 20-85; the sequence is KEGYLVNKST…TYPLPNKSCG (66 aa). Disulfide bonds link cysteine 31–cysteine 84, cysteine 35–cysteine 60, cysteine 44–cysteine 65, and cysteine 48–cysteine 67. Position 84 is a cysteine amide (cysteine 84).

This sequence belongs to the long (4 C-C) scorpion toxin superfamily. Sodium channel inhibitor family. Beta subfamily. In terms of tissue distribution, expressed by the venom gland.

The protein resides in the secreted. In terms of biological role, beta toxins bind voltage-independently at site-4 of sodium channels (Nav) and shift the voltage of activation toward more negative potentials thereby affecting sodium channel activation and promoting spontaneous and repetitive firing. Induces immediate paralysis in crickets after injection, with a total paralysis occurring within 15-30 minutes and lasting for 1-2 hours. Is also lethal to vertebrate (chicks) when injected in very high dosages (more that 100 mg/kg). In Centruroides sculpturatus (Arizona bark scorpion), this protein is Toxin CsEv3.